Reading from the N-terminus, the 474-residue chain is Tocopherol cyclase, chloroplastic (474 aa).

The transit peptide at 1-65 (MNLAVAAALP…TPTPQDRSLR (65 aa)) directs the protein to the chloroplast.

In terms of tissue distribution, present in all green tissues, both in bundle sheath and in mesophyll cells.

Its subcellular location is the plastid. The protein localises to the chloroplast. The catalysed reaction is gamma-tocopherol = 2,3-dimethyl-6-phytylbenzene-1,4-diol. Its pathway is cofactor biosynthesis; tocopherol biosynthesis. Functionally, involved in the synthesis of tocopherols (vitamin E), which presumably protect photosynthetic complexes from oxidative stress. Catalyzes the conversion of 2,3-dimethyl-5-phytyl-1,4-hydroquinone (DMPQ) to gamma-tocopherol. This Zea mays (Maize) protein is Tocopherol cyclase, chloroplastic.